Consider the following 255-residue polypeptide: Imidazole glycerol phosphate synthase subunit HisF (255 aa).

Catalysis depends on residues Asp12 and Asp131.

This sequence belongs to the HisA/HisF family. As to quaternary structure, heterodimer of HisH and HisF.

It localises to the cytoplasm. The catalysed reaction is 5-[(5-phospho-1-deoxy-D-ribulos-1-ylimino)methylamino]-1-(5-phospho-beta-D-ribosyl)imidazole-4-carboxamide + L-glutamine = D-erythro-1-(imidazol-4-yl)glycerol 3-phosphate + 5-amino-1-(5-phospho-beta-D-ribosyl)imidazole-4-carboxamide + L-glutamate + H(+). The protein operates within amino-acid biosynthesis; L-histidine biosynthesis; L-histidine from 5-phospho-alpha-D-ribose 1-diphosphate: step 5/9. Functionally, IGPS catalyzes the conversion of PRFAR and glutamine to IGP, AICAR and glutamate. The HisF subunit catalyzes the cyclization activity that produces IGP and AICAR from PRFAR using the ammonia provided by the HisH subunit. The chain is Imidazole glycerol phosphate synthase subunit HisF from Neisseria meningitidis serogroup C (strain 053442).